The primary structure comprises 265 residues: Acetylglutamate kinase (265 aa).

Substrate-binding positions include 41 to 42 (GG), R63, and N156.

The protein belongs to the acetylglutamate kinase family. ArgB subfamily.

It localises to the cytoplasm. It catalyses the reaction N-acetyl-L-glutamate + ATP = N-acetyl-L-glutamyl 5-phosphate + ADP. It participates in amino-acid biosynthesis; L-arginine biosynthesis; N(2)-acetyl-L-ornithine from L-glutamate: step 2/4. In terms of biological role, catalyzes the ATP-dependent phosphorylation of N-acetyl-L-glutamate. In Brevibacillus brevis (strain 47 / JCM 6285 / NBRC 100599), this protein is Acetylglutamate kinase.